Consider the following 251-residue polypeptide: Chlorocatechol 1,2-dioxygenase (251 aa).

The Fe cation site is built by Tyr130, Tyr164, His188, and His190.

It belongs to the intradiol ring-cleavage dioxygenase family. Fe(3+) serves as cofactor.

It carries out the reaction 3-chlorocatechol + O2 = (2E,4Z)-2-chloromuconate + 2 H(+). The enzyme catalyses 3,4-dichlorocatechol + O2 = (2Z,4Z)-2,3-dichloromuconate + 2 H(+). The catalysed reaction is 3,5-dichlorocatechol + O2 = (2E,4E)-2,4-dichloromuconate + 2 H(+). It catalyses the reaction 3,6-dichlorocatechol + O2 = (2E,4E)-2,5-dichloromuconate + H(+). It carries out the reaction 3,4,6-trichlorocatechol + O2 = (2Z,4E)-2,3,5-trichloromuconate + H(+). The protein operates within xenobiotic degradation. Chlorocatechol 1,2-dioxygenase involved in the degradation of chlorinated benzenes, that occurs via chlorocatechol intermediates. Displays broad substrate specificity. Preferentially cleaves 3-chlorocatechol and 3,4-dichlorocatechol, and shows lower activity on 3,5-dichlorocatechol, 3,6-dichlorocatechol and 3,4,6-trichlorocatechol in vitro. Is not able to convert 3,4,5-trichlorocatechol and 3,4,5,6-tetrachlorocatechol. Thus, probably functions in the degradation pathways of 1,2-dichlorobenzene, 1,4-dichlorobenzene and 1,2,4-trichlorobenzene (via 3,4-dichlorocatechol, 3,6-dichlorocatechol and 3,4,6-trichlorocatechol intermediates, respectively), which allow Pseudomonas sp. strain P51 to grow on these substrates as the sole carbon and energy source. This Pseudomonas sp. (strain P51) protein is Chlorocatechol 1,2-dioxygenase.